We begin with the raw amino-acid sequence, 68 residues long: Large ribosomal subunit protein uL29 (68 aa).

Belongs to the universal ribosomal protein uL29 family.

The sequence is that of Large ribosomal subunit protein uL29 (rpl29) from Archaeoglobus fulgidus (strain ATCC 49558 / DSM 4304 / JCM 9628 / NBRC 100126 / VC-16).